The primary structure comprises 573 residues: Solute carrier family 41 member 2 (573 aa).

Residues 1-162 lie on the Extracellular side of the membrane; the sequence is MTHSKGRPVT…KESSGVMALQ (162 aa). Residues Ser137 and Ser138 each carry the phosphoserine modification. A helical transmembrane segment spans residues 163 to 183; it reads ILVPFLLAGFGTVSAGMVLDI. At 184–195 the chain is on the cytoplasmic side; it reads VQHWEVFKNVTE. The helical transmembrane segment at 196-216 threads the bilayer; that stretch reads VFILVPALLGLKGNLEMTLAS. The Extracellular segment spans residues 217 to 245; sequence RLSTAVNVGKMDSPIEKWNLIIGNLALKQ. Residues 246 to 266 form a helical membrane-spanning segment; the sequence is VQATVVGFLAAVAAIILGWIP. Topologically, residues 267–282 are cytoplasmic; the sequence is EGKYYLSHSILLCSSS. A helical membrane pass occupies residues 283–303; it reads VATAFIASLLQGIIMVGVIVG. The Extracellular portion of the chain corresponds to 304–313; the sequence is SKKTGINPDN. The helical transmembrane segment at 314–334 threads the bilayer; it reads VATPIAASFGDLITLAILAWI. The Cytoplasmic portion of the chain corresponds to 335–347; the sequence is SQGLYSCLETYYY. Residues 348-368 traverse the membrane as a helical segment; that stretch reads ISPLVCAFFLALTPIWIIIAA. Over 369–376 the chain is Extracellular; it reads KHPATRTV. A helical membrane pass occupies residues 377 to 397; the sequence is LHSGWEPVITAMVISSIGGLI. Residues 398–406 are Cytoplasmic-facing; it reads LDTTVSDPN. Residues 407-427 form a helical membrane-spanning segment; sequence LVGIVVYTPVINGIGGNLVAI. Topologically, residues 428 to 469 are extracellular; sequence QASRISTYLHLHSIPGELPEEPKGCSYPFRTFFGSGVNNKSA. The chain crosses the membrane as a helical span at residues 470–490; it reads QVLLLFVIPGHLIFLYTIHLM. The Cytoplasmic portion of the chain corresponds to 491–498; it reads KSGHTSLT. The chain crosses the membrane as a helical span at residues 499–519; sequence VVFVVVYLFAAVLQVFTLLWI. Residues 520–543 are Extracellular-facing; the sequence is ADWMVHRFWRKGKDPDSFSIPYLT. The helical transmembrane segment at 544–564 threads the bilayer; the sequence is ALGDLLGTALLALSFHFLWLI. Residues 565-573 are Cytoplasmic-facing; it reads GDRDGDVGD.

Belongs to the SLC41A transporter family.

The protein resides in the cell membrane. The catalysed reaction is Mg(2+)(in) = Mg(2+)(out). It carries out the reaction Mn(2+)(in) = Mn(2+)(out). It catalyses the reaction Co(2+)(in) = Co(2+)(out). The enzyme catalyses Ni(2+)(in) = Ni(2+)(out). The catalysed reaction is Fe(2+)(in) = Fe(2+)(out). In terms of biological role, acts as a plasma-membrane magnesium transporter. Can also mediate the transport of other divalent metal cations in an order of Ba(2+) &gt; Ni(2+) &gt; Co(2+) &gt; Fe(2+) &gt; Mn(2+). The chain is Solute carrier family 41 member 2 (Slc41a2) from Mus musculus (Mouse).